The sequence spans 367 residues: Sigma54-dependent transcriptional regulator SfnR (367 aa).

Residues 21 to 250 (QVFEDPKSQA…LENVIHHTLL (230 aa)) enclose the Sigma-54 factor interaction domain. Residues 49–56 (GETGTGKE) and 112–121 (ADGGTLFLDE) each bind ATP.

In terms of biological role, involved in the dimethyl sulfide degradation pathway. Activates the expression of sfnG and sfnF. This Pseudomonas fluorescens (strain Pf0-1) protein is Sigma54-dependent transcriptional regulator SfnR.